A 239-amino-acid chain; its full sequence is Geranylgeranylglyceryl phosphate synthase (239 aa).

2 residues coordinate Mg(2+): aspartate 19 and serine 48. Residues 167–173 (YLEAGSG), 197–198 (GG), and 219–220 (GT) each bind sn-glycerol 1-phosphate.

The protein belongs to the GGGP/HepGP synthase family. Group II subfamily. The cofactor is Mg(2+).

The protein resides in the cytoplasm. The catalysed reaction is sn-glycerol 1-phosphate + (2E,6E,10E)-geranylgeranyl diphosphate = sn-3-O-(geranylgeranyl)glycerol 1-phosphate + diphosphate. The protein operates within membrane lipid metabolism; glycerophospholipid metabolism. In terms of biological role, prenyltransferase that catalyzes the transfer of the geranylgeranyl moiety of geranylgeranyl diphosphate (GGPP) to the C3 hydroxyl of sn-glycerol-1-phosphate (G1P). This reaction is the first ether-bond-formation step in the biosynthesis of archaeal membrane lipids. This is Geranylgeranylglyceryl phosphate synthase from Methanopyrus kandleri (strain AV19 / DSM 6324 / JCM 9639 / NBRC 100938).